We begin with the raw amino-acid sequence, 91 residues long: Large ribosomal subunit protein eL43 (91 aa).

The segment at 39–60 (CPFCGKDAMRRGAVGIWNCSKC) adopts a C4-type zinc-finger fold.

Belongs to the eukaryotic ribosomal protein eL43 family.

This is Large ribosomal subunit protein eL43 (rpl-37a) from Ostertagia ostertagi (Brown stomach worm).